The sequence spans 3799 residues: MTNEDKLRDYLNRVMGELRQSRARLSESEARDHEPIAIIGMSCRFPDGVRSPEDLWRVLVDERHCLTDFPADRGWDLDALYHPDPGHSGTSYTRKGGFLHEAAGFDPEFFGISPREALAMDPQQRLLLETSWEVWERAGLDPAAMRGSRTGVFIGSNDLDYATRLRSVPDGVEGYLATGNLASVLSGRLSYTFGLEGPAVTVDTACSSSLVAMHLAAKALRSDECSLAMVGGVSVMAAPGTFLEFSRQRGLAQDGLCKAFADAADGTGMAEGVGVLLLERLSDARRNGHEVLAVLRGSAVNQDGASNGLTAPNGPSQEQVIRQALDNARLTPDSVDVVEAHGTGTRLGDPIEAEALLATYGQDRPEERPLWLGSVKSNIGHTQAAAGVAGVIKMVMALRQETLPATLHVDRPSTQVDWSSGAVSLLTEARPWARNGRPRRAGVSSFGVSGTNAHAILEEAPAATGNPTEADTDQEPAASASPDRTTTLPAVPWPLSGHTPEALRAQARRLHDTLTTVADGEPQPSPLDLGWSLATTRSTHRHRAVVVGADLPHLLQGVDALASGTPAPHLVRGVAGDTRTAFVFPGQGSQWAGMARELADSSPVFAERLRACEEALAPHVDWSLREVLDGSDLEKADVVQPVLWAVMVSLAALWESHGVRPDAVVGHSQGEIAAACVADALSLEDGARVVALRSRALGVLAGRGGMASLALSAEETTARLAAYKDRLSIAAVNGPHSTVVSGDVEPLHELVAACEADGVRARIVPVDYASHSAHVEEIHDTLLELLAPVTPRPSRVPFFSTVTGEWIDTTVMDAAYWYRNLRRTVQFDVATRTLIAEGFGLLIEASPHPVLAIGMQESVEAAAANCAVLGTLRRGEGGLDRYLLSLGEAHAHGADVDWPAVFAGTGAERVELPTYAFQRRRFWLDGGRDGAGGVASAGLASAGHPLFGAVVEVAGGDRTLLSGRLSVLSHPWLADHSVRGVVLVPGAAFVELALCAGERVGCGAVEELTLQAPLVLPVEGAVQVQFAVEAPDERGHRAFTVYGRSDEAAEPDAWQEYASGVLELEARPEPEGLAQWPPADAEVVPVEGLYDLLGGLGYEYGPAFQGLRRVWRRGEELFAEVSLAEELDGQADQFGIHPALLDGALQTSAVALLQHGGEAAEVRLPFAWRGVSLFATGASAARVRLSPAGQDAVSVLVADQDGVPVARVEGLVSRPVAEEQLGAGGGVGRDSLFGVEWVPFAGGDSDALAADVLEVHRFDGLVQDPQGVREAIERALGLIQGWLARERPRGSRLVVVTRGAVGGEVSDLAGAAVWGLVRSAQSEHPGQFVLVDTDGDALAGLPADEPHVMVREGQVLVPRLARVVPATEGGAGGVVWDPEKSLLVTGASGVLAGLVVRHAVAEWAVRHVVLVSRSGADGLAQELAEAGVSVQQARCDVADREAVAAVLAGIPAEHRLGGVIHTAGVLDDGVIESLTPERLEPVLRPKVDGAWWLHELTADVDLSVFAVFSSAAGVFGAAGQGNYAAANAFLDALALYRHREGLPATSLSWGLWAERSGLTGRLAESDLGRLSRQGVLPLSSEQGVALLDAVLATGRPWLVPARLDLGILRTSDQPVPPLLRGLVRRITRRAVTAGANGADSFVQRIAGLSPAEAERAVLELVCGEAAAVLGYASAGAVAPGQAFRELGFDSLTAVELRNRLNGATGLRLPATLIFDYPTPTALATHIRSSAAGTTTGPTAPVAIAGTAVDEAIAIVGMACRYPGGVASPEDLWRLVADEADAVSRFPQDRGWDLDALFDPERPGGTSLTREGGFLYDADQFDAAFFGISPREALAMDPQQRLLLETSWEALERAGIDPATLRGSATGVFAGVMYHDYGTRVLHVPEEVEGYLGNGNAGSIASGRVAYTFGLEGPAVTVDTACSSSLVTLHLASQALRQGECSLALAGGVTVLATPGVFTEFTRQRGLAEDGRCKAFAAAADGTGWGEGVGMLLLERLSDAERNGHPILAVVRGSAVNQDGASNGLTAPNGPSQQRVIRQALANARLTPADIDLVEAHGTGTRLGDPIEAQALLATYGQDRPEGEPAWLGSVKSNIGHTQAAAGVAGVIKSVMAIRNGVLPASLHVDEPTPEVDWDAGAVELLTEARPWPTTDRPRRAAVSSFGASGTNAHVILEQAADTGPVHAHEGDTTPPSVIAWPISGRDEQALREQAARLGAFVGADASLSAADVGNSLARTRASFEHRAVVVGRDRDELLAGVQALAAGEAAANVVTGRAPAEGAGRVAFVFPGQGSQWIGMGLELAEQSPVFAAALEECGQALAEHVDWDGRSLHEVLRQAEGAPSLERVDVVQPALWAVMVALAAAWRSYGIEPDAVVGHSQGEIAAACVAGVLSVEDGARVVAVRSRAITALAGRGQMVSVPLPEADTVELIRPWADDGQIAVAAVNGPASTVISGDSQAVDALLEKLDAQEIRARRIPVDYASHSPQVALIHDELLRVLDGLTPRAGTVPLFSTVTGQWLGATPMDADYWYRNLRETVRFEAGTRALAAEGWGVFVEASPHPVLTLGIQETLEALDHRGVVTGSLRRQEGGQDRLFVSLAKVHTHGGGPLDRPAFHTGTGAPRVDLPTYAFQRRRYWLEAPAGVPGDLSAAGLQTLEHPLLTGVVDLADEQRTVFTGRLSPATHPWLADHAVFGSVLLPGTGFVELALAAGEHVGHGHLDELTLHAPLFLPEEGAVHLQLVLDGPDTSGRRAVTIHSRAEDEAGGQEWTRHAGGTLAVDADHDTPPALTSWPPADADPVDLTEVYDRFAAAGYAYGPAFQGLRRVWRRDGELFAEVELAGPERDAARRFGVHPALLDAALHPLLLGHGAPQTESEGQGRLPFSWTGVSLRATGATTVRVRLTTDDADTVAVTVTDTAGTPVASVDALVTRPVTAAQFAAGRPSGQSGLFEVEWAPVPTPAAGTASWAVLGGGEVGGVGLGSYDDLAALRRAVDSGAPVPEVVLTFCGGRSETAVVPGTHTATREALALLHEWLADERFAGARLAVVTSGAVAAGPDDEVTDLAAAAVWGLVRSAQSEHPGRFVLLDVDGRAVAGAAVPTALATGEPQVAVRGGELLVPRLARAAKAREVGRDAAGVVWDPEKSLLVTGASGVLAGLTVRHAVSVWGVRHVVLLSRGGADALAQELSEVGVSVRQARCDVADREAVAAVLADIPAAHPLGGVIHTAGVLDDGVIESLTPERLEPVLRPKVDGAWWLHELTAGLDLSVFALFASGAGVFGAAGQGNYAAANAFLDALALHRSRKGLPATALSWGLWAERSGLTGQLTDAELNRMTHHGVLPLSSEQGLALLDSALATDRPWFVPVRIDLGAVRRTGFDHPLLRGLVRVPSRRTVAALDNGTPATDPASLWGRLVALSPAEQEAALLDLVGAQAAAVLGHTDPEQVTTDRPFLDLGFDSLTGVELRNRLTAATGLRLPTTLVFKHRTPAALAAQLRTDLVAVHTDGSGTDTAAPVEAARVPTNGGGTAEAFGELFVEAYRQGRSEEFFRLLRLASEFRPTFDAVRARESVPEPVRLAEGPAEGPDGPMLVCFPSVVGPSGPHQYARFAGPLRDRREVWAVAPPGFVQGELLPKDLATYTDATADAVARRVGETPFVLVGYSSGGWLAHAVASRMEEQGAAPAGVVLLDTYLPEGVVGQLGPELVGGLLERREKFRFDFGDDVWLTAMGGYFRLFDHWRPAAIKAPSLLVRSSEPMPGVPSDTDWRSRWDLPHTAVDVPGNHYTLMEDHAAETARAVRDWVGSLS.

A Ketosynthase family 3 (KS3) 1 domain is found at 33–459; the sequence is HEPIAIIGMS…GTNAHAILEE (427 aa). Module regions lie at residues 33–1730 and 1749–3494; these read HEPI…RSSA and DEAI…RTDL. Catalysis depends on for beta-ketoacyl synthase 1 activity residues C206, H341, and H381. Residues 462 to 496 are disordered; that stretch reads AATGNPTEADTDQEPAASASPDRTTTLPAVPWPLS. The 314-residue stretch at 582–895 folds into the Malonyl-CoA:ACP transacylase (MAT) 1 domain; it reads FVFPGQGSQW…LGEAHAHGAD (314 aa). The interval 944–1069 is N-terminal hotdog fold 1; that stretch reads HPLFGAVVEV…GVLELEARPE (126 aa). The PKS/mFAS DH 1 domain occupies 944–1222; sequence HPLFGAVVEV…SRPVAEEQLG (279 aa). The active-site Proton acceptor; for dehydratase activity 1 is the H976. The segment at 1081–1222 is C-terminal hotdog fold 1; it reads AEVVPVEGLY…SRPVAEEQLG (142 aa). The Proton donor; for dehydratase activity 1 role is filled by D1142. Residues 1382 to 1554 enclose the Ketoreductase (KR) 1 domain; sequence LLVTGASGVL…TSLSWGLWAE (173 aa). Residues 1652 to 1730 enclose the Carrier 1 domain; sequence EAERAVLELV…ALATHIRSSA (79 aa). An O-(pantetheine 4'-phosphoryl)serine modification is found at S1690. The region spanning 1749 to 2174 is the Ketosynthase family 3 (KS3) 2 domain; the sequence is DEAIAIVGMA…GTNAHVILEQ (426 aa). Catalysis depends on for beta-ketoacyl synthase 2 activity residues C1921, H2056, and H2096. Residues 2284-2604 enclose the Malonyl-CoA:ACP transacylase (MAT) 2 domain; the sequence is FVFPGQGSQW…VSLAKVHTHG (321 aa). The interval 2656–2781 is N-terminal hotdog fold 2; it reads HPLLTGVVDL…GTLAVDADHD (126 aa). The 281-residue stretch at 2656–2936 folds into the PKS/mFAS DH 2 domain; that stretch reads HPLLTGVVDL…TRPVTAAQFA (281 aa). The active-site Proton acceptor; for dehydratase activity 2 is the H2688. The segment at 2794-2936 is C-terminal hotdog fold 2; the sequence is ADPVDLTEVY…TRPVTAAQFA (143 aa). D2855 functions as the Proton donor; for dehydratase activity 2 in the catalytic mechanism. In terms of domain architecture, Ketoreductase (KR) 2 spans 3142–3314; sequence LLVTGASGVL…TALSWGLWAE (173 aa). One can recognise a Carrier 2 domain in the interval 3419 to 3494; it reads AALLDLVGAQ…ALAAQLRTDL (76 aa). O-(pantetheine 4'-phosphoryl)serine is present on S3454.

It depends on pantetheine 4'-phosphate as a cofactor.

It participates in antibiotic biosynthesis. Functionally, fifth protein in the synthesis of the 16-membered macrolide antibiotics FD-891 and FD-892. Composed of 2 modules. Modifies the product of GfsD by multiple rounds of addition of methylmalonyl-CoA and other modifications to help generate the final products. The polypeptide is Polyketide synthase GfsE (Streptomyces halstedii).